Consider the following 587-residue polypeptide: Zinc finger protein 69 (587 aa).

The disordered stretch occupies residues 42-128 (NGTQQESLAD…TPGTTAAGSQ (87 aa)). The 72-residue stretch at 76-147 (HDEATPGTPA…VDLSQEEWGQ (72 aa)) folds into the KRAB domain. 9 consecutive C2H2-type zinc fingers follow at residues 271 to 293 (HKKKRQEGNKLENPESSNVILEQ), 299 to 321 (KPARKRNKYKLDSIDHPVSCMRA), 327 to 349 (NVCEKMFKQPIHLVEHMRTHTGE), 355 to 377 (KECGRAFSQSASLNTHQRIHTGE), 383 to 405 (EECGKAFRHRSSLNQHHRTHTGE), 411 to 433 (DKCQKAFSQNISLVQHLRTHSGE), 439 to 461 (SECGKPFRQIRHLSEHVRIHTGE), 467 to 489 (TSCCKTFSHRAYLTHHQRIHTGE), and 495 to 517 (KECGKAFRQRIHLSNHRTVHTGV). The interval 564 to 587 (SRHQKIHRRNTFRDDPGHENKRQL) is disordered. Basic and acidic residues predominate over residues 574–587 (TFRDDPGHENKRQL).

It belongs to the krueppel C2H2-type zinc-finger protein family.

The protein localises to the nucleus. Its function is as follows. Putative transcription factor that appears to regulate lipid metabolism. This Mus musculus (Mouse) protein is Zinc finger protein 69.